Here is a 701-residue protein sequence, read N- to C-terminus: DNA ligase (701 aa).

Residues 58-62 (DYEYD), 107-108 (SL), and glutamate 138 contribute to the NAD(+) site. Residue lysine 140 is the N6-AMP-lysine intermediate of the active site. Positions 161, 199, 323, and 347 each coordinate NAD(+). Zn(2+)-binding residues include cysteine 441, cysteine 444, cysteine 459, and cysteine 464. In terms of domain architecture, BRCT spans 621-701 (EKRGKLAGLN…EEFLKMIGQQ (81 aa)).

The protein belongs to the NAD-dependent DNA ligase family. LigA subfamily. The cofactor is Mg(2+). Requires Mn(2+) as cofactor.

The enzyme catalyses NAD(+) + (deoxyribonucleotide)n-3'-hydroxyl + 5'-phospho-(deoxyribonucleotide)m = (deoxyribonucleotide)n+m + AMP + beta-nicotinamide D-nucleotide.. Functionally, DNA ligase that catalyzes the formation of phosphodiester linkages between 5'-phosphoryl and 3'-hydroxyl groups in double-stranded DNA using NAD as a coenzyme and as the energy source for the reaction. It is essential for DNA replication and repair of damaged DNA. This is DNA ligase from Sulfurihydrogenibium azorense (strain DSM 15241 / OCM 825 / Az-Fu1).